The chain runs to 235 residues: Myb family transcription factor PHL12 (235 aa).

A compositionally biased stretch (basic and acidic residues) spans 1 to 12 (MMQSREEIRDDS). The segment at 1-20 (MMQSREEIRDDSSSGLVLTT) is disordered. The HTH myb-type domain maps to 20–80 (TDPKPRLRWT…HLQKFRLGKQ (61 aa)). Residues 51–76 (PKTIMRVMGVKGLTLYHLKSHLQKFR) constitute a DNA-binding region (H-T-H motif). The interval 119–139 (RNMNEMQMEVQRRIEEEVVIE) is coiled coil.

Belongs to the MYB-CC family. In terms of tissue distribution, expressed in phloem and/or cambium.

The protein resides in the nucleus. The polypeptide is Myb family transcription factor PHL12 (Arabidopsis thaliana (Mouse-ear cress)).